The chain runs to 596 residues: Cytochrome P450 monooxygenase FUM15 (596 aa).

The disordered stretch occupies residues 476-512 (DRWLSPKNGNREATEQSKFKIGNQKRDSTAAPEVTQE). Basic and acidic residues predominate over residues 484–503 (GNREATEQSKFKIGNQKRDS). Cys536 is a heme binding site.

This sequence belongs to the cytochrome P450 family. Heme is required as a cofactor.

The protein resides in the endoplasmic reticulum. It functions in the pathway secondary metabolite biosynthesis. In terms of biological role, cytochrome P450 monooxygenase; part of the gene cluster that mediates the biosynthesis of fumonisins B1 (FB1), B2 (FB2), B3 (FB3), and B4 (FB4), which are carcinogenic mycotoxins. Within the pathway, FUM15 may be responsible for the hydroxylations at positions C-14 and/or C-15. Also plays a role in self-protection from FB1 toxicity, probably through derivatization of FB1, and may contribute to ceramide biosynthesis. The biosynthesis starts with the FUM1-catalyzed carbon chain assembly from one molecule of acetyl-CoA, eight molecules of malonyl-CoA, and two molecules of methionine (in S-adenosyl form). The C18 polyketide chain is released from the enzyme by a nucleophilic attack of a carbanion, which is derived from R-carbon of alanine by decarboxylation, on the carbonyl carbon of polyketide acyl chain. This step is catalyzed by the pyridoxal 5'-phosphate-dependent aminoacyl transferase FUM8. The resultant 3-keto intermediate is then stereospecifically reduced to a 3-hydroxyl product by reductase FUM13. Subsequent oxidations at C-10 by the cytochrome P450 monooxygenase FUM2, C-14 and C-15 by FUM6, FUM12 or FUM15, tricarballylic esterification of the hydroxyl groups on C-14 and C-15 by acyltransferase FUM14, and C-5 hydroxylation by 2-keto-glutarate-dependent dioxygenase FUM3 furnish the biosynthesis of fumonisins. The tricarballylic moieties are most likely derived from the citric acid cycle, and their addition to the carbon backbone may involve FUM7, FUM10, FUM11 and FUM14. The polypeptide is Cytochrome P450 monooxygenase FUM15 (Gibberella moniliformis (strain M3125 / FGSC 7600) (Maize ear and stalk rot fungus)).